The following is a 349-amino-acid chain: sn-glycerol-3-phosphate import ATP-binding protein UgpC (349 aa).

The ABC transporter domain maps to 4–234 (ISLRDVRKSY…PATTFVAGFI (231 aa)). 36–43 (GPSGCGKS) provides a ligand contact to ATP.

This sequence belongs to the ABC transporter superfamily. sn-glycerol-3-phosphate importer (TC 3.A.1.1.3) family. The complex is composed of two ATP-binding proteins (UgpC), two transmembrane proteins (UgpA and UgpE) and a solute-binding protein (UgpB).

Its subcellular location is the cell inner membrane. It carries out the reaction sn-glycerol 3-phosphate(out) + ATP + H2O = sn-glycerol 3-phosphate(in) + ADP + phosphate + H(+). Its function is as follows. Part of the ABC transporter complex UgpBAEC involved in sn-glycerol-3-phosphate (G3P) import. Responsible for energy coupling to the transport system. This Cereibacter sphaeroides (strain ATCC 17023 / DSM 158 / JCM 6121 / CCUG 31486 / LMG 2827 / NBRC 12203 / NCIMB 8253 / ATH 2.4.1.) (Rhodobacter sphaeroides) protein is sn-glycerol-3-phosphate import ATP-binding protein UgpC.